A 261-amino-acid chain; its full sequence is tRNA pseudouridine synthase A (261 aa).

The active-site Nucleophile is D51. Y109 contacts substrate.

Belongs to the tRNA pseudouridine synthase TruA family. In terms of assembly, homodimer.

It carries out the reaction uridine(38/39/40) in tRNA = pseudouridine(38/39/40) in tRNA. Functionally, formation of pseudouridine at positions 38, 39 and 40 in the anticodon stem and loop of transfer RNAs. The polypeptide is tRNA pseudouridine synthase A (Shewanella sp. (strain MR-7)).